Here is a 469-residue protein sequence, read N- to C-terminus: UDP-glycosyltransferase 75B1 (469 aa).

The active-site Proton acceptor is histidine 16. Histidine 16 is a binding site for an anthocyanidin. UDP-alpha-D-glucose is bound by residues glutamine 334, histidine 349, tryptophan 352, serine 354, glutamate 357, aspartate 373, and glutamine 374.

The protein belongs to the UDP-glycosyltransferase family. In terms of assembly, interacts with CALS1, ROP1 and phragmoplastin.

The protein localises to the cytoplasm. The protein resides in the perinuclear region. It is found in the cytoskeleton. It localises to the phragmoplast. The enzyme catalyses (indol-3-yl)acetate + UDP-alpha-D-glucose = 1-O-(indol-3-ylacetyl)-beta-D-glucose + UDP. It participates in plant hormone metabolism; auxin conjugation. Possesses low catalytic activity on indole-3-acetic acid (IAA) in vitro. May transfer UDP-glucose from sucrose synthase to callose synthase for the synthesis of callose at the forming cell plate during cytokinesis. Has high affinity for 4-aminobenzoate. Catalyzes the formation of 4-aminobenzoate glucose ester which represents a storage form of 4-aminobenzoate in the vacuole. Is the major source of this activity in the plant. Also active in vitro on benzoates and benzoate derivatives. This is UDP-glycosyltransferase 75B1 (UGT75B1) from Arabidopsis thaliana (Mouse-ear cress).